Here is a 299-residue protein sequence, read N- to C-terminus: MLEVVLQVLSISAITTTIALFFCGIPICMQIRRQGAVGDISGVPFLMGVLGGSFWLRYGLLKMDYVMIIVNVVGVACMAFYCVFFLIYSLPKKTFTCQLILVTSTIGGMVLWIALKPNLDYLGVICMTFNIMNFGAPLAGLGVVLKNREVSTLPLPMCVANFLVSSQWCLYGNLVSDIYIIIPNGIGMFLAIVQLALFVVLPIRENEKSPLEKLASWFTGRDSKVKDLERGDCIVSSPPSSPQKVPNETRSDVEDKFDKLMAETSSTIPSDSRRGSMGSPPSYKSRSSSDPDLSSIQSP.

Positions 7-91 (QVLSISAITT…CVFFLIYSLP (85 aa)) constitute a MtN3/slv 1 domain. A run of 7 helical transmembrane segments spans residues 8-28 (VLSI…IPIC), 36-56 (AVGD…SFWL), 67-87 (MIIV…FFLI), 95-115 (FTCQ…WIAL), 124-144 (VICM…LGVV), 155-175 (LPMC…GNLV), and 180-200 (IIIP…LFVV). In terms of domain architecture, MtN3/slv 2 spans 121-205 (YLGVICMTFN…ALFVVLPIRE (85 aa)). A disordered region spans residues 230–299 (RGDCIVSSPP…DPDLSSIQSP (70 aa)). The span at 247-261 (NETRSDVEDKFDKLM) shows a compositional bias: basic and acidic residues. Over residues 276 to 299 (SMGSPPSYKSRSSSDPDLSSIQSP) the composition is skewed to low complexity.

This sequence belongs to the SWEET sugar transporter family.

It localises to the golgi apparatus membrane. Its subcellular location is the cell membrane. Mediates both low-affinity uptake and efflux of sugar across the membrane. This is Sugar transporter SWEET1 (swt-1) from Caenorhabditis elegans.